The primary structure comprises 92 residues: Putative membrane protein insertion efficiency factor (92 aa).

This sequence belongs to the UPF0161 family.

The protein resides in the cell membrane. Could be involved in insertion of integral membrane proteins into the membrane. This chain is Putative membrane protein insertion efficiency factor, found in Tropheryma whipplei (strain TW08/27) (Whipple's bacillus).